Reading from the N-terminus, the 80-residue chain is Exodeoxyribonuclease 7 small subunit (80 aa).

It belongs to the XseB family. Heterooligomer composed of large and small subunits.

It is found in the cytoplasm. The catalysed reaction is Exonucleolytic cleavage in either 5'- to 3'- or 3'- to 5'-direction to yield nucleoside 5'-phosphates.. Its function is as follows. Bidirectionally degrades single-stranded DNA into large acid-insoluble oligonucleotides, which are then degraded further into small acid-soluble oligonucleotides. The polypeptide is Exodeoxyribonuclease 7 small subunit (Maridesulfovibrio salexigens (strain ATCC 14822 / DSM 2638 / NCIMB 8403 / VKM B-1763) (Desulfovibrio salexigens)).